Here is a 184-residue protein sequence, read N- to C-terminus: Cell number regulator 5 (184 aa).

A helical membrane pass occupies residues 91–111 (MLWGLLTSLCCVFTGGLVLAV). A disordered region spans residues 162–184 (RTGSGSSPAPNVTPPPVQTMDEL).

The protein belongs to the cornifelin family. In terms of tissue distribution, expressed in roots, leaves, stalks, immature ears, endosperm and pollen.

It is found in the membrane. This chain is Cell number regulator 5 (CNR5), found in Zea mays (Maize).